Reading from the N-terminus, the 169-residue chain is N-alpha-acetyltransferase 50 (169 aa).

Positions 6 to 155 constitute an N-acetyltransferase domain; the sequence is IELGDVTPHN…DAHVLQKNLK (150 aa). Thr-12 bears the Phosphothreonine mark. A substrate-binding site is contributed by Tyr-31. N6-acetyllysine occurs at positions 34 and 37. Tyr-73 is an active-site residue. Position 75 (Met-75) interacts with substrate. Residue 77 to 90 participates in acetyl-CoA binding; that stretch reads LGCLAPYRRLGIGT. A Phosphotyrosine modification is found at Tyr-110. His-112 is a catalytic residue. Residue 117 to 126 coordinates CoA; sequence NESAIDFYRK. A substrate region spans residues 138-141; sequence YYKR. At Lys-140 the chain carries N6-acetyllysine.

It belongs to the acetyltransferase family. GNAT subfamily. As to quaternary structure, component of the N-terminal acetyltransferase E (NatE) complex at least composed of NAA10, NAA15 and NAA50. Interacts with NAA10. Interacts with NAA15. Predominantly interacts with NAA15 in the N-terminal acetyltransferase A complex (NatA complex); the interactions reduce the acetylation activity of the NatA complex. Component of the N-terminal acetyltransferase E (NatE)/HYPK complex at least composed of NAA10, NAA15, NAA50 and HYPK. Within the complex interacts with NAA15. Its capacity to interact with the NatA complex is reduced by HYPK. Interacts with NAA35.

Its subcellular location is the cytoplasm. It is found in the nucleus. The enzyme catalyses N-terminal L-methionyl-L-alanyl-[protein] + acetyl-CoA = N-terminal N(alpha)-acetyl-L-methionyl-L-alanyl-[protein] + CoA + H(+). The catalysed reaction is N-terminal L-methionyl-L-seryl-[protein] + acetyl-CoA = N-terminal N(alpha)-acetyl-L-methionyl-L-seryl-[protein] + CoA + H(+). It carries out the reaction N-terminal L-methionyl-L-valyl-[protein] + acetyl-CoA = N-terminal N(alpha)-acetyl-L-methionyl-L-valyl-[protein] + CoA + H(+). It catalyses the reaction N-terminal L-methionyl-L-threonyl-[protein] + acetyl-CoA = N-terminal N(alpha)-acetyl-L-methionyl-L-threonyl-[protein] + CoA + H(+). The enzyme catalyses N-terminal L-methionyl-L-lysyl-[protein] + acetyl-CoA = N-terminal N(alpha)-acetyl-L-methionyl-L-lysyl-[protein] + CoA + H(+). The catalysed reaction is N-terminal L-methionyl-L-leucyl-[protein] + acetyl-CoA = N-terminal N(alpha)-acetyl-L-methionyl-L-leucyl-[protein] + CoA + H(+). It carries out the reaction N-terminal L-methionyl-L-phenylalanyl-[protein] + acetyl-CoA = N-terminal N(alpha)-acetyl-L-methionyl-L-phenylalanyl-[protein] + CoA + H(+). It catalyses the reaction N-terminal L-methionyl-L-tyrosyl-[protein] + acetyl-CoA = N-terminal N(alpha)-acetyl-L-methionyl-L-tyrosyl-[protein] + CoA + H(+). Functionally, N-alpha-acetyltransferase that acetylates the N-terminus of proteins that retain their initiating methionine. Has a broad substrate specificity: able to acetylate the initiator methionine of most peptides, except for those with a proline in second position. Also displays N-epsilon-acetyltransferase activity by mediating acetylation of the side chain of specific lysines on proteins. Autoacetylates in vivo. The relevance of N-epsilon-acetyltransferase activity is however unclear: able to acetylate H4 in vitro, but this result has not been confirmed in vivo. Component of N-alpha-acetyltransferase complexes containing NAA10 and NAA15, which has N-alpha-acetyltransferase activity. Does not influence the acetyltransferase activity of NAA10. However, it negatively regulates the N-alpha-acetyltransferase activity of the N-terminal acetyltransferase A complex (also called the NatA complex). The multiprotein complexes probably constitute the major contributor for N-terminal acetylation at the ribosome exit tunnel, with NAA10 acetylating all amino termini that are devoid of methionine and NAA50 acetylating other peptides. Required for sister chromatid cohesion during mitosis by promoting binding of CDCA5/sororin to cohesin: may act by counteracting the function of NAA10. In Mus musculus (Mouse), this protein is N-alpha-acetyltransferase 50.